The chain runs to 272 residues: Glutamate racemase (272 aa).

Substrate is bound by residues 16 to 17 (DS) and 48 to 49 (YG). Residue cysteine 79 is the Proton donor/acceptor of the active site. 80–81 (NT) contributes to the substrate binding site. The Proton donor/acceptor role is filled by cysteine 191. Substrate is bound at residue 192 to 193 (TH).

Belongs to the aspartate/glutamate racemases family.

The enzyme catalyses L-glutamate = D-glutamate. Its pathway is cell wall biogenesis; peptidoglycan biosynthesis. Provides the (R)-glutamate required for cell wall biosynthesis. The sequence is that of Glutamate racemase from Chlorobaculum parvum (strain DSM 263 / NCIMB 8327) (Chlorobium vibrioforme subsp. thiosulfatophilum).